Consider the following 261-residue polypeptide: Prostatic glandular kallikrein-6 (261 aa).

The first 18 residues, 1 to 18 (MWLLILFLILSLGWNDAA), serve as a signal peptide directing secretion. Residues 19 to 24 (PPGQSR) constitute a propeptide, activation peptide. Residues 25-258 (IIGGFNCEKN…FTSWMKKVMK (234 aa)) enclose the Peptidase S1 domain. 5 disulfides stabilise this stretch: Cys-31–Cys-173, Cys-50–Cys-66, Cys-152–Cys-219, Cys-184–Cys-198, and Cys-209–Cys-234. His-65 (charge relay system) is an active-site residue. Asn-108 carries an N-linked (GlcNAc...) asparagine glycan. Catalysis depends on Asp-120, which acts as the Charge relay system. Ser-213 (charge relay system) is an active-site residue.

It belongs to the peptidase S1 family. Kallikrein subfamily.

The enzyme catalyses Preferential cleavage of Arg-|-Xaa bonds in small molecule substrates. Highly selective action to release kallidin (lysyl-bradykinin) from kininogen involves hydrolysis of Met-|-Xaa or Leu-|-Xaa.. In terms of biological role, glandular kallikreins cleave Met-Lys and Arg-Ser bonds in kininogen to release Lys-bradykinin. The polypeptide is Prostatic glandular kallikrein-6 (Klk6) (Rattus norvegicus (Rat)).